The sequence spans 181 residues: Shikimate kinase 2 (181 aa).

An ATP-binding site is contributed by 12 to 17 (GCGKTT). Mg(2+) contacts are provided by threonine 16 and aspartate 32. Positions 34, 58, and 79 each coordinate substrate. Residues 112 to 126 (EAEPEADLRPTLTGK) are LID domain. Residue arginine 120 participates in ATP binding. Position 139 (arginine 139) interacts with substrate.

This sequence belongs to the shikimate kinase family. AroL subfamily. Monomer. Requires Mg(2+) as cofactor.

It localises to the cytoplasm. It carries out the reaction shikimate + ATP = 3-phosphoshikimate + ADP + H(+). It participates in metabolic intermediate biosynthesis; chorismate biosynthesis; chorismate from D-erythrose 4-phosphate and phosphoenolpyruvate: step 5/7. Its function is as follows. Catalyzes the specific phosphorylation of the 3-hydroxyl group of shikimic acid using ATP as a cosubstrate. The sequence is that of Shikimate kinase 2 from Salmonella enteritidis PT4 (strain P125109).